The primary structure comprises 60 residues: Large ribosomal subunit protein bL32 (60 aa).

Disordered stretches follow at residues 1–28 and 41–60; these read MAVQ…PGIA and HISP…KSEA. The segment covering 9–19 has biased composition (basic residues); it reads SPSKRGMHRSH.

It belongs to the bacterial ribosomal protein bL32 family.

This chain is Large ribosomal subunit protein bL32, found in Verminephrobacter eiseniae (strain EF01-2).